We begin with the raw amino-acid sequence, 123 residues long: Large ribosomal subunit protein uL22c (123 aa).

It belongs to the universal ribosomal protein uL22 family. In terms of assembly, part of the 50S ribosomal subunit.

The protein localises to the plastid. It localises to the chloroplast. Its function is as follows. This protein binds specifically to 23S rRNA. In terms of biological role, the globular domain of the protein is located near the polypeptide exit tunnel on the outside of the subunit, while an extended beta-hairpin is found that lines the wall of the exit tunnel in the center of the 70S ribosome. The sequence is that of Large ribosomal subunit protein uL22c (rpl22) from Chara vulgaris (Common stonewort).